A 137-amino-acid polypeptide reads, in one-letter code: MPTINQLVRKPRKSKIEKSDSPALNIGYNSHKKVHTKLAAPQKRGVATRVGTMTPKKPNSALRKFARVRLSNLIEVTAYIPGIGHNLQEHSVVLIRGGRVKDLPGVRYHIVRGALDTAGVADRKQGRSKYGAKRPKG.

Disordered stretches follow at residues 1–21 (MPTINQLVRKPRKSKIEKSDS) and 34–57 (VHTKLAAPQKRGVATRVGTMTPKK). D102 carries the 3-methylthioaspartic acid modification.

It belongs to the universal ribosomal protein uS12 family. In terms of assembly, part of the 30S ribosomal subunit. Contacts proteins S8 and S17. May interact with IF1 in the 30S initiation complex.

Its function is as follows. With S4 and S5 plays an important role in translational accuracy. Functionally, interacts with and stabilizes bases of the 16S rRNA that are involved in tRNA selection in the A site and with the mRNA backbone. Located at the interface of the 30S and 50S subunits, it traverses the body of the 30S subunit contacting proteins on the other side and probably holding the rRNA structure together. The combined cluster of proteins S8, S12 and S17 appears to hold together the shoulder and platform of the 30S subunit. In Streptococcus equi subsp. zooepidemicus (strain H70), this protein is Small ribosomal subunit protein uS12.